Reading from the N-terminus, the 408-residue chain is DNA-directed RNA polymerase subunit Rpo1C (408 aa).

This sequence belongs to the RNA polymerase beta' chain family. In terms of assembly, part of the RNA polymerase complex.

The protein localises to the cytoplasm. It catalyses the reaction RNA(n) + a ribonucleoside 5'-triphosphate = RNA(n+1) + diphosphate. In terms of biological role, DNA-dependent RNA polymerase (RNAP) catalyzes the transcription of DNA into RNA using the four ribonucleoside triphosphates as substrates. Forms part of the jaw domain. This chain is DNA-directed RNA polymerase subunit Rpo1C, found in Methanosarcina mazei (strain ATCC BAA-159 / DSM 3647 / Goe1 / Go1 / JCM 11833 / OCM 88) (Methanosarcina frisia).